Reading from the N-terminus, the 590-residue chain is Bacillolysin (590 aa).

The signal sequence occupies residues 1–24 (MKKVWFSLLGGAMLLGSVASGASA). A propeptide spans 25 to 286 (ESSVSGPAQL…GSIVFQYDII (262 aa)) (activation peptide). The Ca(2+) site is built by D339, D341, and D419. Residue H423 participates in Zn(2+) binding. E424 is a catalytic residue. 2 residues coordinate Zn(2+): H427 and E447. Positions 466, 469, 470, 473, and 476 each coordinate Ca(2+). The Proton donor role is filled by H507.

The protein belongs to the peptidase M4 family. It depends on Ca(2+) as a cofactor. Zn(2+) serves as cofactor.

Its subcellular location is the secreted. It carries out the reaction Similar, but not identical, to that of thermolysin.. In terms of biological role, involved in the generation of beta- and alpha-amylases from the large amylase precursor. The sequence is that of Bacillolysin (npr) from Paenibacillus polymyxa (Bacillus polymyxa).